We begin with the raw amino-acid sequence, 211 residues long: 2,3-bisphosphoglycerate-dependent phosphoglycerate mutase (211 aa).

Substrate is bound by residues 9–16 (RHGQSDWN), 22–23 (TG), R61, 88–91 (ERDY), K99, 115–116 (RR), and 159–160 (GN). The active-site Tele-phosphohistidine intermediate is the H10. Catalysis depends on E88, which acts as the Proton donor/acceptor.

The protein belongs to the phosphoglycerate mutase family. BPG-dependent PGAM subfamily. In terms of assembly, homodimer.

It carries out the reaction (2R)-2-phosphoglycerate = (2R)-3-phosphoglycerate. Its pathway is carbohydrate degradation; glycolysis; pyruvate from D-glyceraldehyde 3-phosphate: step 3/5. Catalyzes the interconversion of 2-phosphoglycerate and 3-phosphoglycerate. This is 2,3-bisphosphoglycerate-dependent phosphoglycerate mutase from Rhizobium rhizogenes (strain K84 / ATCC BAA-868) (Agrobacterium radiobacter).